The primary structure comprises 610 residues: Cytosolic 5'-nucleotidase 1B (610 aa).

Disordered regions lie at residues 1-34 and 101-277; these read MSQT…DKTG and GSQE…DEDD. Residues 9–34 show a composition bias toward basic and acidic residues; sequence KKNEPGMRSSKESLEAEKRKESDKTG. Residues 119 to 132 show a composition bias toward polar residues; that stretch reads SQWSRISRSPSTKA. The segment covering 148-166 has biased composition (low complexity); it reads PSSSTSSRTPSTSPSLHDS. The span at 167 to 183 shows a compositional bias: pro residues; sequence SPPPLSGQPSLQPPASP. A compositionally biased stretch (polar residues) spans 236–265; sequence SRTSPTEWKSSSQRRGIYPASTQLDRNSLS. Asp467 (nucleophile) is an active-site residue.

It belongs to the 5'-nucleotidase type 3 family. It depends on Mg(2+) as a cofactor. As to expression, highly expressed in testis, placenta and pancreas. Detected at lower levels in heart, kidney, liver and lung.

Its subcellular location is the cytoplasm. It catalyses the reaction a ribonucleoside 5'-phosphate + H2O = a ribonucleoside + phosphate. The catalysed reaction is AMP + H2O = adenosine + phosphate. Its activity is regulated as follows. Activated by ADP. Functionally, catalyzes the hydrolysis of nucleotide monophosphates, releasing inorganic phosphate and the corresponding nucleoside, AMP is the major substrate. This chain is Cytosolic 5'-nucleotidase 1B (NT5C1B), found in Homo sapiens (Human).